The following is a 309-amino-acid chain: Zinc-finger homeodomain protein 5 (309 aa).

Residues 1–16 (MDMRSHEMIERRREDN) are compositionally biased toward basic and acidic residues. The segment at 1 to 21 (MDMRSHEMIERRREDNGNNNG) is disordered. The ZF-HD dimerization-type; degenerate zinc-finger motif lies at 76–125 (YRECLKNHAASVGGSVHDGCGEFMPSGEEGTIEALRCAACDCHRNFHRKE). The homeobox DNA-binding region spans 240–303 (KKRFRTKFTT…NNKNNAKKPP (64 aa)).

Homo- and heterodimer with other ZFHD proteins. Interacts with MIF1, MIF2 and MIF3; these interactions prevent nuclear localization and DNA-binding to inhibit transcription regulation activity. Binds to ZHD1, ZHD2, ZHD4, ZHD10 and ZHD11. As to expression, mostly expressed in flowers and inflorescence.

It localises to the nucleus. Putative transcription factor. Binds DNA at 5'-ATTA-3' consensus promoter regions. Regulates floral architecture and leaf development. Regulators in the abscisic acid (ABA) signal pathway that confers sensitivity to ABA in an ARF2-dependent manner. This chain is Zinc-finger homeodomain protein 5 (ZHD5), found in Arabidopsis thaliana (Mouse-ear cress).